Consider the following 211-residue polypeptide: MSTDLRTHVLSEHHVSRETAASLDLYVAQLTRWQTVKNLVGPATLKEVWHRHIADALQLLTVAPEATRWLDLGSGAGIPGLILALAGKERPGFHVGLVESNARKCAFLSETARLTGAPVTVHNARIEAVIGTLTDTEIVCARALAPLSQLLAWTEPLLTSGTIGLFPKGRDAATELTEAEDEWTFTRDLIPSRTDSQARIVRVTSLSRVDP.

S-adenosyl-L-methionine contacts are provided by residues glycine 73, 126-127, and arginine 142; that span reads IE.

This sequence belongs to the methyltransferase superfamily. RNA methyltransferase RsmG family.

It localises to the cytoplasm. It catalyses the reaction guanosine(527) in 16S rRNA + S-adenosyl-L-methionine = N(7)-methylguanosine(527) in 16S rRNA + S-adenosyl-L-homocysteine. Its function is as follows. Specifically methylates the N7 position of guanine in position 527 of 16S rRNA. This Methylorubrum extorquens (strain PA1) (Methylobacterium extorquens) protein is Ribosomal RNA small subunit methyltransferase G.